Reading from the N-terminus, the 477-residue chain is tRNA-2-methylthio-N(6)-dimethylallyladenosine synthase (477 aa).

The 118-residue stretch at 13–130 (GGLFIKTYGC…LPAMIEEALA (118 aa)) folds into the MTTase N-terminal domain. [4Fe-4S] cluster is bound by residues Cys22, Cys59, Cys93, Cys178, Cys182, and Cys185. One can recognise a Radical SAM core domain in the interval 164-396 (ESNGVSAFVS…QAMLNEQTAA (233 aa)). A TRAM domain is found at 399–462 (EGMVGTTQRV…ANSLKGKLVA (64 aa)).

This sequence belongs to the methylthiotransferase family. MiaB subfamily. As to quaternary structure, monomer. Requires [4Fe-4S] cluster as cofactor.

The protein localises to the cytoplasm. It catalyses the reaction N(6)-dimethylallyladenosine(37) in tRNA + (sulfur carrier)-SH + AH2 + 2 S-adenosyl-L-methionine = 2-methylsulfanyl-N(6)-dimethylallyladenosine(37) in tRNA + (sulfur carrier)-H + 5'-deoxyadenosine + L-methionine + A + S-adenosyl-L-homocysteine + 2 H(+). Catalyzes the methylthiolation of N6-(dimethylallyl)adenosine (i(6)A), leading to the formation of 2-methylthio-N6-(dimethylallyl)adenosine (ms(2)i(6)A) at position 37 in tRNAs that read codons beginning with uridine. The chain is tRNA-2-methylthio-N(6)-dimethylallyladenosine synthase from Hydrogenovibrio crunogenus (strain DSM 25203 / XCL-2) (Thiomicrospira crunogena).